Consider the following 202-residue polypeptide: MAAPWRRWPTGLLAVLRPLLTCRPLQGTTLQRDVLLFEHDRGRFFTILGLFCAGQGVFWASMAVAAVSRPPVPVQPLDAEVPNRGPFDLRSALWRYGLAVGCGAIGALVLGAGLLFSLRSVRSVVLRAGGQQVTLTTHAPFGLGAHFTVPLKQVSCMAHRGEVPAMLPLKVKGRRFYFLLDKTGHFPNTKLFDNTVGAYRSL.

Over 1–43 (MAAPWRRWPTGLLAVLRPLLTCRPLQGTTLQRDVLLFEHDRGR) the chain is Mitochondrial matrix. The chain crosses the membrane as a helical span at residues 44-64 (FFTILGLFCAGQGVFWASMAV). At 65–97 (AAVSRPPVPVQPLDAEVPNRGPFDLRSALWRYG) the chain is on the mitochondrial intermembrane side. A helical membrane pass occupies residues 98 to 118 (LAVGCGAIGALVLGAGLLFSL). The Mitochondrial matrix portion of the chain corresponds to 119–202 (RSVRSVVLRA…DNTVGAYRSL (84 aa)).

This sequence belongs to the TMEM223 family. In terms of assembly, associates with the mitochondrial ribosome.

The protein resides in the mitochondrion inner membrane. Mitochondrial ribosome-associated protein involved in the first steps of cytochrome c oxidase complex (complex IV) biogenesis. Stimulates the translation of MT-CO1 mRNA and is a constituent of early MT-CO1 assembly intermediates. The protein is Transmembrane protein 223 of Homo sapiens (Human).